The chain runs to 414 residues: STAGA complex 65 subunit gamma (414 aa).

Residues 87–108 (NQQQTEGVKTEESEPLPSCPGS) are disordered. Ser-108 is modified (phosphoserine). Lys-271 is covalently cross-linked (Glycyl lysine isopeptide (Lys-Gly) (interchain with G-Cter in SUMO2)). Residues Ser-323 and Ser-334 each carry the phosphoserine modification. Residues 346 to 414 (PQESEEGNVS…QRCKKRMRKI (69 aa)) form a disordered region. The segment covering 386–395 (SSYGSHSTDS) has biased composition (low complexity).

In terms of assembly, component of the STAGA transcription coactivator-HAT complex, at least composed of SUPT3H, SUPT7L, GCN5L2, TAF5L, TAF6L, TADA3L, TAD1L, TAF10, TAF12 and TAF9. Post-translationally, sumoylated. Expressed at high levels in adenocarcinomas and gliomas and low in esophageal cancers and malignant hematological disease. Also expressed at high level in the thymus, low in peripheral blood mononuclear cells, and lowest in the stomach, small intestine, and skeletal muscle.

The protein localises to the nucleus. In Homo sapiens (Human), this protein is STAGA complex 65 subunit gamma (SUPT7L).